The primary structure comprises 368 residues: Phosphate acyltransferase (368 aa).

The interval 337–368 is disordered; that stretch reads LEQAARDASGAGQASPIAGQPAEPYAAQSSKA.

This sequence belongs to the PlsX family. In terms of assembly, homodimer. Probably interacts with PlsY.

It localises to the cytoplasm. The catalysed reaction is a fatty acyl-[ACP] + phosphate = an acyl phosphate + holo-[ACP]. The protein operates within lipid metabolism; phospholipid metabolism. Its function is as follows. Catalyzes the reversible formation of acyl-phosphate (acyl-PO(4)) from acyl-[acyl-carrier-protein] (acyl-ACP). This enzyme utilizes acyl-ACP as fatty acyl donor, but not acyl-CoA. The polypeptide is Phosphate acyltransferase (Paraburkholderia phytofirmans (strain DSM 17436 / LMG 22146 / PsJN) (Burkholderia phytofirmans)).